The primary structure comprises 369 residues: Flagellar P-ring protein (369 aa).

The signal sequence occupies residues 1 to 22; the sequence is MLNFKHLMAAALLLSTSLGVQA.

This sequence belongs to the FlgI family. In terms of assembly, the basal body constitutes a major portion of the flagellar organelle and consists of four rings (L,P,S, and M) mounted on a central rod.

Its subcellular location is the periplasm. The protein resides in the bacterial flagellum basal body. Assembles around the rod to form the L-ring and probably protects the motor/basal body from shearing forces during rotation. The sequence is that of Flagellar P-ring protein from Pseudomonas fluorescens (strain ATCC BAA-477 / NRRL B-23932 / Pf-5).